Consider the following 177-residue polypeptide: dCTP deaminase, dUMP-forming (177 aa).

Residues 95–100 (RSSLGR), aspartate 112, 120–122 (TLE), glutamine 141, tyrosine 155, and glutamine 162 each bind dCTP. The Proton donor/acceptor role is filled by glutamate 122.

This sequence belongs to the dCTP deaminase family. Homotrimer.

The enzyme catalyses dCTP + 2 H2O = dUMP + NH4(+) + diphosphate. The protein operates within pyrimidine metabolism; dUMP biosynthesis; dUMP from dCTP: step 1/1. Its function is as follows. Bifunctional enzyme that catalyzes both the deamination of dCTP to dUTP and the hydrolysis of dUTP to dUMP without releasing the toxic dUTP intermediate. This Hydrogenobaculum sp. (strain Y04AAS1) protein is dCTP deaminase, dUMP-forming.